Reading from the N-terminus, the 627-residue chain is DNA mismatch repair protein MutL (627 aa).

A disordered region spans residues 363–397; it reads FAEPAAREPVAPRYSPAPASGSRPAAPWPNAQPGY. Residues 364-387 are compositionally biased toward low complexity; it reads AEPAAREPVAPRYSPAPASGSRPA.

This sequence belongs to the DNA mismatch repair MutL/HexB family.

In terms of biological role, this protein is involved in the repair of mismatches in DNA. It is required for dam-dependent methyl-directed DNA mismatch repair. May act as a 'molecular matchmaker', a protein that promotes the formation of a stable complex between two or more DNA-binding proteins in an ATP-dependent manner without itself being part of a final effector complex. In Shigella flexneri serotype 5b (strain 8401), this protein is DNA mismatch repair protein MutL.